The following is an 88-amino-acid chain: UPF0250 protein SO_1163 (88 aa).

This sequence belongs to the UPF0250 family.

In Shewanella oneidensis (strain ATCC 700550 / JCM 31522 / CIP 106686 / LMG 19005 / NCIMB 14063 / MR-1), this protein is UPF0250 protein SO_1163.